Reading from the N-terminus, the 687-residue chain is DNA ligase (687 aa).

NAD(+)-binding positions include 34 to 38, 83 to 84, and glutamate 117; these read DAEYD and SL. The active-site N6-AMP-lysine intermediate is the lysine 119. NAD(+) contacts are provided by arginine 140, glutamate 182, lysine 298, and lysine 322. Residues cysteine 416, cysteine 419, cysteine 434, and cysteine 439 each coordinate Zn(2+). Residues 609-687 form the BRCT domain; that stretch reads EARGPFAGKT…EEEFVRLLKE (79 aa).

Belongs to the NAD-dependent DNA ligase family. LigA subfamily. The cofactor is Mg(2+). Mn(2+) serves as cofactor.

The enzyme catalyses NAD(+) + (deoxyribonucleotide)n-3'-hydroxyl + 5'-phospho-(deoxyribonucleotide)m = (deoxyribonucleotide)n+m + AMP + beta-nicotinamide D-nucleotide.. Functionally, DNA ligase that catalyzes the formation of phosphodiester linkages between 5'-phosphoryl and 3'-hydroxyl groups in double-stranded DNA using NAD as a coenzyme and as the energy source for the reaction. It is essential for DNA replication and repair of damaged DNA. The polypeptide is DNA ligase (Anaeromyxobacter dehalogenans (strain 2CP-1 / ATCC BAA-258)).